A 112-amino-acid polypeptide reads, in one-letter code: Nucleoid-associated protein RER_03900 (112 aa).

It belongs to the YbaB/EbfC family. In terms of assembly, homodimer.

It localises to the cytoplasm. The protein resides in the nucleoid. Functionally, binds to DNA and alters its conformation. May be involved in regulation of gene expression, nucleoid organization and DNA protection. The sequence is that of Nucleoid-associated protein RER_03900 from Rhodococcus erythropolis (strain PR4 / NBRC 100887).